The following is a 334-amino-acid chain: Probable fructose-bisphosphate aldolase class 1 (334 aa).

This sequence belongs to the class I fructose-bisphosphate aldolase family.

The catalysed reaction is beta-D-fructose 1,6-bisphosphate = D-glyceraldehyde 3-phosphate + dihydroxyacetone phosphate. It participates in carbohydrate degradation; glycolysis; D-glyceraldehyde 3-phosphate and glycerone phosphate from D-glucose: step 4/4. This is Probable fructose-bisphosphate aldolase class 1 from Xylella fastidiosa (strain 9a5c).